We begin with the raw amino-acid sequence, 304 residues long: Ornithine carbamoyltransferase (304 aa).

Carbamoyl phosphate-binding positions include 47-50 (STRT), R98, and 125-128 (HPCQ). L-ornithine is bound by residues N156, D221, and 225–226 (SM). Carbamoyl phosphate is bound by residues 262 to 263 (CL) and R290.

Belongs to the aspartate/ornithine carbamoyltransferase superfamily. OTCase family.

Its subcellular location is the cytoplasm. It carries out the reaction carbamoyl phosphate + L-ornithine = L-citrulline + phosphate + H(+). It functions in the pathway amino-acid biosynthesis; L-arginine biosynthesis; L-arginine from L-ornithine and carbamoyl phosphate: step 1/3. Reversibly catalyzes the transfer of the carbamoyl group from carbamoyl phosphate (CP) to the N(epsilon) atom of ornithine (ORN) to produce L-citrulline. In Methanococcus maripaludis (strain C7 / ATCC BAA-1331), this protein is Ornithine carbamoyltransferase.